The chain runs to 315 residues: Heme oxygenase 2 (315 aa).

Over residues 1 to 15 the composition is skewed to polar residues; sequence MSSEVETSEGVDESE. Residues 1-29 are disordered; the sequence is MSSEVETSEGVDESENNSTAPEKENHTKM. Ser-2 bears the N-acetylserine mark. Position 2 is a phosphoserine (Ser-2). Topologically, residues 2–294 are cytoplasmic; the sequence is SSEVETSEGV…TAMAVLRKPS (293 aa). Residues His-44, Tyr-153, Lys-198, and Arg-202 each coordinate heme b. 2 HRM repeats span residues 263–268 and 280–285; these read KCPFYA and NCPFRT. 2 positions are modified to S-nitrosocysteine: Cys-264 and Cys-281. The chain crosses the membrane as a helical; Anchor for type IV membrane protein span at residues 295 to 315; the sequence is LQLILAASVALVAGLLAWYYM.

This sequence belongs to the heme oxygenase family. Post-translationally, a soluble form arises by proteolytic removal of the membrane anchor. In terms of processing, S-nitrosylated by BLVRB. As to expression, widely distributed in body with a high concentration in the brain.

The protein localises to the microsome membrane. Its subcellular location is the endoplasmic reticulum membrane. It catalyses the reaction heme b + 3 reduced [NADPH--hemoprotein reductase] + 3 O2 = biliverdin IXalpha + CO + Fe(2+) + 3 oxidized [NADPH--hemoprotein reductase] + 3 H2O + H(+). With respect to regulation, inhibited by metalloporphyrins such as Sn- and Zn-protoporphyrins. In terms of biological role, catalyzes the oxidative cleavage of heme at the alpha-methene bridge carbon, released as carbon monoxide (CO), to generate biliverdin IXalpha, while releasing the central heme iron chelate as ferrous iron. The protein is Heme oxygenase 2 (Hmox2) of Rattus norvegicus (Rat).